A 757-amino-acid chain; its full sequence is MTTFHVAGFPRVGAKRELKFAQERYWRGEIAEQDLLEIAQKLREINWKHQAAANADFVAVADFTFYDHILDLQVATGAIPARFGFDSQNLSLNEYFQLARGNQTQFAIEMTKWFDTNYHYLVPEFTKNTEFKANPAHYVQQIREAKALGFKFKPTIVGPLTFLWLGKEKGEAFNRFELLAKLVPVYVEILNALVAEGAEWIQIDEPALAVDLPTEWIEAYKAVYTTLKEKVKAKLLLATYFGSVAEHAPLLKGLPVDGLHIDLVRAPAQLAAFEDYNKVLSVGVIDGRNIWRANLNQVLDVVEPLKAKFGENLWIAPSCSLLHTPYDLEVETQLKANKPELYSWLAFTLQKVQELRVIKTALEQGRGAVQAELDASQAAADARANSKEIHRPEVAERLANLPTDADKRKSPFAERIAKQNAWLNLPLLPTTNIGSFPQTVEIRQARAKFKKGELSVADYEAAMKKEIEFVVRRQEELDLDVLVHGEAERNDMVEYFGELLDGFAFTKFGWVQSYGSRCVKPPVIYGDVVRPEPMTVRWSQYAQSLTNKVMKGMLTGPVTILQWSFVRNDIPRSTVCKQIGVALSDEVLDLEKAGIKVIQIDEPAIREGLPLKRADWDAYLQWAGEAFRLSYMGVQDDTQIHTHMCYSEFNDILPAIAGLDADVITIETSRSDMELLTAFGDFKYPNDIGPGVYDIHSPRVPKAEEIERLLRKALNVVPKERLWVNPDCGLKTRGWPETIAQLEVMMEVTKKLRAELN.

5-methyltetrahydropteroyltri-L-glutamate is bound by residues 16–19 and Lys-112; that span reads RELK. L-homocysteine-binding positions include 433-435 and Glu-486; that span reads IGS. Residues 433–435 and Glu-486 contribute to the L-methionine site; that span reads IGS. 5-methyltetrahydropteroyltri-L-glutamate is bound by residues 517–518 and Trp-563; that span reads RC. Asp-601 is an L-homocysteine binding site. Asp-601 is an L-methionine binding site. Glu-607 contacts 5-methyltetrahydropteroyltri-L-glutamate. His-643, Cys-645, and Glu-667 together coordinate Zn(2+). The active-site Proton donor is His-696. Cys-728 is a binding site for Zn(2+).

It belongs to the vitamin-B12 independent methionine synthase family. Zn(2+) is required as a cofactor.

It catalyses the reaction 5-methyltetrahydropteroyltri-L-glutamate + L-homocysteine = tetrahydropteroyltri-L-glutamate + L-methionine. It functions in the pathway amino-acid biosynthesis; L-methionine biosynthesis via de novo pathway; L-methionine from L-homocysteine (MetE route): step 1/1. Catalyzes the transfer of a methyl group from 5-methyltetrahydrofolate to homocysteine resulting in methionine formation. The chain is 5-methyltetrahydropteroyltriglutamate--homocysteine methyltransferase from Pasteurella multocida (strain Pm70).